A 965-amino-acid chain; its full sequence is Collagenase ColQ1 (965 aa).

A signal peptide spans 1 to 30 (MNKKSKINKVMLSISTMALSLGALQAPASA). A propeptide spanning residues 31–93 (EEKVPYNVLK…KAAVKQVKES (63 aa)) is cleaved from the precursor. The tract at residues 94–366 (YSMADLNKMN…AVEQITTNYN (273 aa)) is activator domain. Residues 94 to 765 (YSMADLNKMN…VFHGIAKDDG (672 aa)) are S1 metalloprotease domain. The segment at 376-645 (DLEKIRKEGK…MQQLIDNQDK (270 aa)) is catalytic subdomain. Histidine 501 lines the Zn(2+) pocket. Glutamate 502 is an active-site residue. Zn(2+) is bound by residues histidine 505 and glutamate 533. The segment at 653 to 765 (DDYLAEHAPK…VFHGIAKDDG (113 aa)) is helper subdomain. The PKD domain maps to 769-850 (APTVNINGPY…ESKSETTVTV (82 aa)). The tract at residues 842–867 (SKSETTVTVKDGSLTESEPNNRPEEA) is disordered. Residues 845–859 (ETTVTVKDGSLTESE) show a composition bias toward polar residues. A collagen-binding domain region spans residues 853-965 (GSLTESEPNN…GDGTYKLSVK (113 aa)).

The protein belongs to the peptidase M9B family. Collagenase subfamily. Requires Ca(2+) as cofactor. Zn(2+) serves as cofactor.

The protein localises to the secreted. It carries out the reaction Digestion of native collagen in the triple helical region at Xaa-|-Gly bonds. With synthetic peptides, a preference is shown for Gly at P3 and P1', Pro and Ala at P2 and P2', and hydroxyproline, Ala or Arg at P3'.. Strongly inhibited by EDTA. Not inhibited by E-64 and PMSF, broad-spectrum cysteine and serine protease inhibitors. Its function is as follows. Acts as a true collagenase, which is highly active and cleaves natively folded collagen. In vitro, can also cleave gelatin and the synthetic peptide FALGPA (furylacryloyl-Leu-Gly-Pro-Ala). Causes damage on dermal collagen (COL), resulting in gaps in the tissue, which might lead to an accelerated bacterial infiltration and penetration into deeper sites of the host. This Bacillus cereus (strain Q1) protein is Collagenase ColQ1.